Reading from the N-terminus, the 354-residue chain is Envelope protein US28 (354 aa).

At 1-37 (MTPTTTTAELTTEFDYDEDATPCVFTDVLNQSKPVTL) the chain is on the extracellular side. N-linked (GlcNAc...) asparagine; by host glycosylation is present at Asn30. The chain crosses the membrane as a helical span at residues 38 to 58 (FLYGVVFLFGSIGNFLVIFTI). The Cytoplasmic portion of the chain corresponds to 59–69 (TWRRRIQCSGD). The helical transmembrane segment at 70 to 90 (VYFINLAAADLLFVCTLPLWM) threads the bilayer. The Extracellular portion of the chain corresponds to 91–101 (QYLLDHNSLAS). A helical transmembrane segment spans residues 102-122 (VPCTLLTACFYVAMFASLCFI). Over 123–145 (TEIALDRYYAIVYMRYRPVKQAC) the chain is Cytoplasmic. A helical membrane pass occupies residues 146–166 (LFSIFWWIFAVIIAIPHFMVV). Residues 167-183 (TKKDNQCMTDYDYLEVS) are Extracellular-facing. A helical membrane pass occupies residues 184-204 (YPIILNVELMLGAFVIPLSVI). At 205 to 228 (SYCYYRISRIVAVSQSRHKGRIVR) the chain is on the cytoplasmic side. Residues 229 to 249 (VLIAVVLVFIIFWLPYHLTLF) traverse the membrane as a helical segment. Residues 250-273 (VDTLKLLKWISSSCEFERSLKRAL) are Extracellular-facing. Residues 274–294 (ILTESLAFCHCCLNPLLYVFV) form a helical membrane-spanning segment. Residues 295 to 354 (GTKFRQELHCLLAEFRQRLFSRDVSWYHSMSFSRRGSPSRRETSSDTLSDEVCRVSQIIP) lie on the Cytoplasmic side of the membrane.

This sequence belongs to the G-protein coupled receptor 1 family. As to quaternary structure, interacts with host GPRASP1; this interaction targets US28 to lysosomes for degradation. Interacts with host CX3CL1/Fractalkine (via N-terminus). Post-translationally, phosphorylated. High phosphorylation occurs concomitantly with receptor endocytosis and correlate with low receptor presence at the plasma membrane.

The protein resides in the host cell membrane. Its function is as follows. Receptor for a C-C type chemokine. Binds to a great number of different CC-chemokines including CCL5/RANTES, CCL2/MCP-1, CCL3/MIP-1-alpha as well as CX3CL1/Fractalkine. Transduces signals resulting in the activation of MAP kinase signaling pathways and augmentation of intracellular calcium ion levels, leading to alterations in chemotactic behavior of vascular smooth muscle cells and macrophages. The US28 receptor also exhibits high levels of agonist-independent signaling activity and agonist-independent endocytosis. Interacts with the host Gi complex without activating it, thereby probably interfering with the chemokine-Gi signaling. May also function as a G protein sink to sequester G protein from the cell surface via internalization. Interacts with endogenous Gaq/11 subunits and thereby constitutively activates phospholipase C. The protein is Envelope protein US28 (US28) of Human cytomegalovirus (strain Merlin) (HHV-5).